The primary structure comprises 322 residues: NADH-ubiquinone oxidoreductase chain 1 (322 aa).

8 helical membrane passes run 4 to 24 (VFSILELISFLIPILLSVAFL), 73 to 93 (YLFFFSPLLFLALALLLWNFM), 106 to 126 (LLLVLGLSSLSVYAILGSGWA), 150 to 170 (LALILLSLIIFSSSFNLTYIM), 175 to 195 (FSWFSLSCLPLFYIWFVSTLA), 224 to 244 (FVLFFIAEYANIILMNYFSVV), 257 to 277 (FPISIIIVGIKTTFLFSVLWV), and 302 to 322 (IGALCAILALVALLGISLPLF).

It belongs to the complex I subunit 1 family.

It is found in the mitochondrion inner membrane. The enzyme catalyses a ubiquinone + NADH + 5 H(+)(in) = a ubiquinol + NAD(+) + 4 H(+)(out). Core subunit of the mitochondrial membrane respiratory chain NADH dehydrogenase (Complex I) that is believed to belong to the minimal assembly required for catalysis. Complex I functions in the transfer of electrons from NADH to the respiratory chain. The immediate electron acceptor for the enzyme is believed to be ubiquinone. This is NADH-ubiquinone oxidoreductase chain 1 (ND1) from Strongylocentrotus purpuratus (Purple sea urchin).